The primary structure comprises 180 residues: Ribosome-recycling factor (180 aa).

Residues 135–156 (SDLKKDNDLSEDSRHRTEDDIQ) are disordered.

This sequence belongs to the RRF family.

It localises to the cytoplasm. Responsible for the release of ribosomes from messenger RNA at the termination of protein biosynthesis. May increase the efficiency of translation by recycling ribosomes from one round of translation to another. The sequence is that of Ribosome-recycling factor from Oenococcus oeni (strain ATCC BAA-331 / PSU-1).